Reading from the N-terminus, the 424-residue chain is Glutathione reductase (424 aa).

K8 is an FAD binding site. Residue Y56 coordinates glutathione. A72 serves as a coordination point for FAD. A137, I140, E143, R160, R166, and G236 together coordinate NADP(+). D277 contacts FAD. L283 serves as a coordination point for NADP(+). T285 provides a ligand contact to FAD. R293 serves as a coordination point for glutathione. An NADP(+)-binding site is contributed by V316. Position 413 (H413) interacts with FAD. Residue H413 is the Proton acceptor of the active site.

The protein belongs to the class-I pyridine nucleotide-disulfide oxidoreductase family. Homodimer; disulfide-linked. The cofactor is FAD.

It localises to the mitochondrion. The protein localises to the cytoplasm. It catalyses the reaction 2 glutathione + NADP(+) = glutathione disulfide + NADPH + H(+). Catalyzes the reduction of glutathione disulfide (GSSG) to reduced glutathione (GSH). Constitutes the major mechanism to maintain a high GSH:GSSG ratio in the cytosol. This chain is Glutathione reductase (Gsr), found in Rattus norvegicus (Rat).